A 351-amino-acid polypeptide reads, in one-letter code: MRAVLAREMDGRRVLGRFWSGWRRGLGVRPVPEDAGFGTEARHQRQPRGSCQRSGPLGDQPFAGLLPKNLSREELVDALRAAVVDRKGPLVTLNKPQGLPVTGKPGELTLFSVLPELSQSLGLREQELQVVRASGKESSGLVLLSSCPQTASRLQKYFTHARRAQRPTATYCAVTDGIPAASEGKIQAALKLEHIDGVNLTVPVKAPSRKDILEGVKKTLSHFRVVATGSGCALVQLQPLTVFSSQLQVHMVLQLCPVLGDHMYSARVGTVLGQRFLLPAENNKPQRQVLDEALLRRLHLTPSQAAQLPLHLHLHRLLLPGTRARDTPVELLAPLPPYFSRTLQCLGLRLQ.

The N-terminal 25 residues, 1–25 (MRAVLAREMDGRRVLGRFWSGWRRG), are a transit peptide targeting the mitochondrion. A disordered region spans residues 33 to 58 (EDAGFGTEARHQRQPRGSCQRSGPLG). Ser71 carries the post-translational modification Phosphoserine.

This sequence belongs to the pseudouridine synthase RluA family. In terms of assembly, forms a regulatory protein-RNA complex, consisting of RCC1L, NGRN, RPUSD3, RPUSD4, TRUB2, FASTKD2 and 16S mt-rRNA.

The protein localises to the mitochondrion matrix. It carries out the reaction a uridine in mRNA = a pseudouridine in mRNA. Catalyzes uridine to pseudouridine isomerization (pseudouridylation) of specific mitochondrial mRNAs (mt-mRNAs), a post-transcriptional modification necessary for their translation. Acts at position 390 in COXI mt-mRNA and at position 697-699 in mitochondrial COXIII mt-mRNA. As a component of a functional protein-RNA module, consisting of RCC1L, NGRN, RPUSD3, RPUSD4, TRUB2, FASTKD2 and 16S mitochondrial ribosomal RNA (16S mt-rRNA), controls 16S mt-rRNA abundance and may play a role in mitochondrial ribosome biogenesis. The polypeptide is Mitochondrial mRNA pseudouridine synthase RPUSD3 (Homo sapiens (Human)).